A 175-amino-acid chain; its full sequence is uncharacterized protein (175 aa).

Residues 113–175 (AQLPRDSRGN…RTRSGGLERL (63 aa)) are disordered.

This is an uncharacterized protein from Bos taurus (Bovine).